The chain runs to 230 residues: Ribonuclease 3 (230 aa).

The 134-residue stretch at 1-134 (MKQLEELLST…FLGALLLDKG (134 aa)) folds into the RNase III domain. Residue Glu-47 coordinates Mg(2+). The active site involves Asp-51. Mg(2+) is bound by residues Asp-120 and Glu-123. Residue Glu-123 is part of the active site. One can recognise a DRBM domain in the interval 160 to 229 (DYKTCLQEFL…AKNALAQLSE (70 aa)).

It belongs to the ribonuclease III family. In terms of assembly, homodimer. Mg(2+) serves as cofactor.

The protein resides in the cytoplasm. The catalysed reaction is Endonucleolytic cleavage to 5'-phosphomonoester.. Its function is as follows. Digests double-stranded RNA. Involved in the processing of primary rRNA transcript to yield the immediate precursors to the large and small rRNAs (23S and 16S). Processes some mRNAs, and tRNAs when they are encoded in the rRNA operon. Processes pre-crRNA and tracrRNA of type II CRISPR loci if present in the organism. The sequence is that of Ribonuclease 3 from Streptococcus pyogenes serotype M28 (strain MGAS6180).